The chain runs to 422 residues: Serine--tRNA ligase (422 aa).

231–233 is an L-serine binding site; that stretch reads TSE. 262-264 provides a ligand contact to ATP; sequence RQE. Position 285 (glutamate 285) interacts with L-serine. 349–352 provides a ligand contact to ATP; it reads EISS. Serine 384 lines the L-serine pocket.

Belongs to the class-II aminoacyl-tRNA synthetase family. Type-1 seryl-tRNA synthetase subfamily. As to quaternary structure, homodimer. The tRNA molecule binds across the dimer.

Its subcellular location is the cytoplasm. It carries out the reaction tRNA(Ser) + L-serine + ATP = L-seryl-tRNA(Ser) + AMP + diphosphate + H(+). It catalyses the reaction tRNA(Sec) + L-serine + ATP = L-seryl-tRNA(Sec) + AMP + diphosphate + H(+). It participates in aminoacyl-tRNA biosynthesis; selenocysteinyl-tRNA(Sec) biosynthesis; L-seryl-tRNA(Sec) from L-serine and tRNA(Sec): step 1/1. Catalyzes the attachment of serine to tRNA(Ser). Is also able to aminoacylate tRNA(Sec) with serine, to form the misacylated tRNA L-seryl-tRNA(Sec), which will be further converted into selenocysteinyl-tRNA(Sec). The sequence is that of Serine--tRNA ligase from Mycoplasma mycoides subsp. mycoides SC (strain CCUG 32753 / NCTC 10114 / PG1).